Here is a 1321-residue protein sequence, read N- to C-terminus: Multidrug resistance protein pgp-1 (1321 aa).

The Cytoplasmic segment spans residues 1 to 77 (MLRNGSLRQS…YTTTLEKLLL (77 aa)). The region spanning 77-381 (LFIGTLVAVI…AGPQLAVLGT (305 aa)) is the ABC transmembrane type-1 1 domain. Residues 78–98 (FIGTLVAVITGAGLPLMSILQ) form a helical membrane-spanning segment. N-linked (GlcNAc...) asparagine glycans are attached at residues Asn-115 and Asn-125. A helical membrane pass occupies residues 144-164 (AMTVGMWAAGQITVTCYLYVA). N-linked (GlcNAc...) asparagine glycosylation occurs at Asn-190. 4 consecutive transmembrane segments (helical) span residues 213–233 (KIGM…VAFT), 240–260 (LVML…AKSM), 321–341 (ISFG…FYIG), and 350–370 (LNFG…MALG). Over 371–753 (LAGPQLAVLG…LYHARPHALS (383 aa)) the chain is Cytoplasmic. The 237-residue stretch at 416–652 (ITVENVHFTY…QGLYYDLVTA (237 aa)) folds into the ABC transporter 1 domain. 451–458 (GSSGCGKS) provides a ligand contact to ATP. 2 helical membrane passes run 754-774 (LFIG…YSVF) and 798-818 (LMFL…TFFM). Positions 754–1043 (LFIGMSTATI…ATSYFPEYAK (290 aa)) constitute an ABC transmembrane type-1 2 domain. Asn-850 carries N-linked (GlcNAc...) asparagine glycosylation. Helical transmembrane passes span 874–894 (FSTV…AFFY), 895–915 (GWQM…GQYL), 978–998 (IQGL…TCAY), and 1017–1037 (VLRV…ATSY). Topologically, residues 1038 to 1321 (FPEYAKATFA…LTQKQMTEKK (284 aa)) are cytoplasmic. In terms of domain architecture, ABC transporter 2 spans 1077-1315 (VIFKNVRFAY…KGAYYKLTQK (239 aa)). Position 1112–1119 (1112–1119 (GPSGCGKS)) interacts with ATP.

Belongs to the ABC transporter superfamily. ABCB family. Multidrug resistance exporter (TC 3.A.1.201) subfamily. In terms of tissue distribution, intestinal cells.

Its subcellular location is the membrane. It carries out the reaction ATP + H2O + xenobioticSide 1 = ADP + phosphate + xenobioticSide 2.. Functionally, energy-dependent efflux pump responsible for decreased drug accumulation in multidrug-resistant cells. This chain is Multidrug resistance protein pgp-1 (pgp-1), found in Caenorhabditis elegans.